Consider the following 217-residue polypeptide: Small ribosomal subunit protein uS3 (217 aa).

A KH type-2 domain is found at 38 to 106 (VRKYIETALK…RVHINIIEIK (69 aa)).

Belongs to the universal ribosomal protein uS3 family. Part of the 30S ribosomal subunit. Forms a tight complex with proteins S10 and S14.

Its function is as follows. Binds the lower part of the 30S subunit head. Binds mRNA in the 70S ribosome, positioning it for translation. The chain is Small ribosomal subunit protein uS3 from Lysinibacillus sphaericus (strain C3-41).